A 107-amino-acid chain; its full sequence is Phosphoribosyl-ATP pyrophosphatase (107 aa).

The protein belongs to the PRA-PH family.

It is found in the cytoplasm. It carries out the reaction 1-(5-phospho-beta-D-ribosyl)-ATP + H2O = 1-(5-phospho-beta-D-ribosyl)-5'-AMP + diphosphate + H(+). The protein operates within amino-acid biosynthesis; L-histidine biosynthesis; L-histidine from 5-phospho-alpha-D-ribose 1-diphosphate: step 2/9. This chain is Phosphoribosyl-ATP pyrophosphatase, found in Methylobacterium radiotolerans (strain ATCC 27329 / DSM 1819 / JCM 2831 / NBRC 15690 / NCIMB 10815 / 0-1).